A 3132-amino-acid chain; its full sequence is Enniatin synthetase (3132 aa).

The tract at residues 53–466 is condensation 1; that stretch reads ADDKQRAVGH…VEKVDMMTQE (414 aa). The tract at residues 186 to 212 is disordered; the sequence is NDEHPRQFETPDSSQATPEEDLQPNPS. Residues 495 to 887 form an adenylation 1 region; the sequence is SQSPNKAAVA…GRMDSQVKIR (393 aa). A disordered region spans residues 994 to 1013; the sequence is SQKTHSTPSQQSQAAISSGT. Residues 1010-1086 enclose the Carrier 1 domain; it reads SSGTDTETKL…GLKAIVIGTS (77 aa). Serine 1047 is modified (O-(pantetheine 4'-phosphoryl)serine). The condensation 2 stretch occupies residues 1105–1534; it reads SYAQNRMWFL…ETCISVLPLT (430 aa). Residues 1563-1960 form an adenylation 2 region; it reads FREQAAANPE…GRMDNQFKIR (398 aa). The segment at 2021–2177 is S-adenosyl-L-methionine-dependent N-methyltransferase; sequence EGWQDHFESG…YLAEVIDGLI (157 aa). Carrier domains lie at 2504–2578 and 2598–2672; these read FPIS…RQGL and APRT…ESSH. Residues serine 2538 and serine 2632 each carry the O-(pantetheine 4'-phosphoryl)serine modification. Positions 2719–3124 are condensation 3; sequence QDVYPSTQMQ…RHVLEEVCKT (406 aa).

Belongs to the NRP synthetase family. Requires pantetheine 4'-phosphate as cofactor.

It participates in antibiotic biosynthesis; enniatin biosynthesis. Nonribosomal peptide synthetase that synthesizes enniatin by coupling three D-hydroxycarboxylic acids and three L-amino acids via amide and ester bonds in an alternating fashion. Whereas ESYN1 can accept different amino acids as precursors (L-valine, L-isoleucine or L-leucine), only one species of D-hydroxycarboxylic acid can be found in natural enniatin isolates (D-hydroxyisovaleric acid, D-Hiv). D-Hiv stems from L-valine deanimation by a valine aminotransferase to 2-keto-isovaleric acid (2-Kiv), which becomes subsequently reduced by a keto-isovaleric acid reductase (KivR) to D-Hiv. This Fusarium oxysporum (Fusarium vascular wilt) protein is Enniatin synthetase.